Reading from the N-terminus, the 158-residue chain is Small ribosomal subunit protein uS15 (158 aa).

The segment covering 1 to 10 has biased composition (basic residues); sequence MARMHTRRRG. The segment at 1–66 is disordered; the sequence is MARMHTRRRG…EGVKGTPIPD (66 aa). A compositionally biased stretch (acidic residues) spans 21–32; the sequence is DPPEWSDIDADA. The segment covering 33–45 has biased composition (basic and acidic residues); the sequence is IEERVVELAEQGH.

The protein belongs to the universal ribosomal protein uS15 family. Part of the 30S ribosomal subunit.

The polypeptide is Small ribosomal subunit protein uS15 (Haloquadratum walsbyi (strain DSM 16790 / HBSQ001)).